A 75-amino-acid polypeptide reads, in one-letter code: Protein Tlp homolog (75 aa).

The disordered stretch occupies residues 53 to 75 (REALDGMREEIKDEARDKKNGYM).

This sequence belongs to the Tlp family.

The protein is Protein Tlp homolog of Clostridium botulinum (strain Langeland / NCTC 10281 / Type F).